The chain runs to 75 residues: Alpha-amylase inhibitor Paim-2 (75 aa).

Intrachain disulfides connect cysteine 10/cysteine 26 and cysteine 44/cysteine 72.

In terms of biological role, inhibits mammalian alpha-amylases specifically but has no action on plant and microbial alpha-amylases. The chain is Alpha-amylase inhibitor Paim-2 from Streptomyces olivaceoviridis (Streptomyces corchorusii).